The primary structure comprises 933 residues: uncharacterized protein (933 aa).

Polar residues predominate over residues 1–28 (MNGNLPHIQIQSPKNSLDHLNNGRQATH). Disordered stretches follow at residues 1–135 (MNGN…GESD), 173–194 (MDNESSEEERDGIPRVEGNAAD), and 252–275 (ATDFPNLAHESSEPSSSRHTADAQ). Positions 29–47 (NFEHGKPGDREEANGHADA) are enriched in basic and acidic residues. The span at 49 to 59 (SSSGRSRYLSS) shows a compositional bias: low complexity. Composition is skewed to polar residues over residues 87-101 (TLSFLNPSRASSNTH) and 108-135 (NRSSNVTRTVSGRKSNHGSSLTDTGESD). The span at 173–182 (MDNESSEEER) shows a compositional bias: acidic residues. Positions 264–275 (EPSSSRHTADAQ) are enriched in polar residues. 8 WD repeats span residues 314–353 (SSNNAIWAMKFSRDGRYLAVGGQDRILRIWAVLDSEHARS), 385–423 (GHTADILDLSWSRNNFLLSSSMDKTARLWHPVRKDCLCC), 425–465 (EHSD…VSFW), 467–506 (ELPELITAVAFSPDGGLAIAGTFVGLCLFYDTRGLRFRTQ), 517–563 (AKGS…LELK), 568–607 (ANAQSQNRAYFDDDGNYVICGSEDHQVFIWDLPPQHMHKT), 617–657 (ASVR…SVIS), and 665–710 (PSLR…AARK). Serine 722 is subject to Phosphoserine. The tract at residues 756 to 796 (NASQITNNENNGNDDIKKGDEPEEEHVGLRKNSTQEKNANL) is disordered. A compositionally biased stretch (polar residues) spans 757 to 768 (ASQITNNENNGN). Over residues 769–783 (DDIKKGDEPEEEHVG) the composition is skewed to basic and acidic residues.

Its subcellular location is the endoplasmic reticulum. The protein localises to the nucleus. This is an uncharacterized protein from Schizosaccharomyces pombe (strain 972 / ATCC 24843) (Fission yeast).